Here is a 122-residue protein sequence, read N- to C-terminus: Insulin-like 3 (122 aa).

Residues 1-15 (MRAPLLLMLLALGSA) form the signal peptide. Intrachain disulfides connect C29–C107, C41–C120, and C106–C111.

The protein belongs to the insulin family. In terms of assembly, heterodimer of a B chain and an A chain linked by two disulfide bonds. As to expression, expressed exclusively in Leydig cells of the testis.

Its subcellular location is the secreted. Its function is as follows. Seems to play a role in testicular function. May be a trophic hormone with a role in testicular descent in fetal life. Is a ligand for LGR8 receptor. The sequence is that of Insulin-like 3 (Insl3) from Mus musculus (Mouse).